The chain runs to 179 residues: Inner membrane-spanning protein YciB (179 aa).

5 consecutive transmembrane segments (helical) span residues isoleucine 22–valine 42, methionine 50–asparagine 70, tryptophan 76–methionine 96, leucine 121–leucine 141, and phenylalanine 149–isoleucine 169.

It belongs to the YciB family.

It localises to the cell inner membrane. In terms of biological role, plays a role in cell envelope biogenesis, maintenance of cell envelope integrity and membrane homeostasis. In Shigella boydii serotype 18 (strain CDC 3083-94 / BS512), this protein is Inner membrane-spanning protein YciB.